Reading from the N-terminus, the 234-residue chain is MSTNPAGGLLPLIRLLQLASPALPVGAYTYSQGLEWAVECGTVRTEADARRWIGDVLEWSLARFEAPLVARLLAAWADGDDAEVARLNEDFLASRETSELRAETVQMGYSLVRLLADLDAFAGLPGWKARLVALDTPAFPVAWTAAAAAWRIPADQALSAYLWAWLENQVMAAVKAVPLGQSAGQRLLADLGAAVPALVEAAQCLPEAEWSNFTPGLAIASSRHETQYTRLFRS.

The protein belongs to the UreF family. UreD, UreF and UreG form a complex that acts as a GTP-hydrolysis-dependent molecular chaperone, activating the urease apoprotein by helping to assemble the nickel containing metallocenter of UreC. The UreE protein probably delivers the nickel.

The protein resides in the cytoplasm. Its function is as follows. Required for maturation of urease via the functional incorporation of the urease nickel metallocenter. This is Urease accessory protein UreF from Azoarcus sp. (strain BH72).